A 548-amino-acid polypeptide reads, in one-letter code: (S)-beta-macrocarpene synthase (548 aa).

Residues aspartate 302 and aspartate 306 each coordinate Mg(2+). Residues aspartate 302, aspartate 306, arginine 443, and asparagine 446 each coordinate substrate. Positions 302–306 (DDTLD) match the DDXXD motif motif. Residues asparagine 446, serine 450, and glutamate 454 each contribute to the Mg(2+) site.

The protein belongs to the terpene synthase family. As to quaternary structure, monomer. The cofactor is Mg(2+). Mn(2+) serves as cofactor. As to expression, expressed in roots. Not detected in leaves, unless damaged by herbivory or infected by fungi.

The protein resides in the cytoplasm. The catalysed reaction is (S)-beta-bisabolene = (S)-beta-macrocarpene. The enzyme catalyses (2E,6E)-farnesyl diphosphate = (S)-beta-bisabolene + diphosphate. It carries out the reaction (2E)-geranyl diphosphate = (4S)-limonene + diphosphate. It catalyses the reaction (2E)-geranyl diphosphate = beta-myrcene + diphosphate. The catalysed reaction is (2E)-geranyl diphosphate = terpinolene + diphosphate. The enzyme catalyses (2E)-geranyl diphosphate + H2O = (S)-linalool + diphosphate. The protein operates within secondary metabolite biosynthesis; terpenoid biosynthesis. Its function is as follows. Involved in the biosynthesis of the bicyclic sesquiterpene (S)-beta-macrocarpene. Can use both geranyl diphosphate and farnesyl diphosphate as substrate, but not geranylgeranyl diphosphate. Produces mainly (S)-beta-macrocarpene, but also smaller amounts of beta-bisabolene and (E)-beta-farnesene when used with farnesyl diphosphate as substrate. In the presence of geranyl diphosphate, produces the acyclic monoterpenes beta-myrcene and linalool along with minor amounts of the cyclic compounds limonene, alpha-thujene, sabinene and alpha-terpinolene. May be involved in plant defense. This is (S)-beta-macrocarpene synthase from Zea mays (Maize).